We begin with the raw amino-acid sequence, 472 residues long: ATP-dependent rRNA helicase rrp3 (472 aa).

Residues 1-52 (MPAIKKRKIAREAPQQEDHSDSEAHSSASEDAAPNTTEQEQEPSEAPKQAPK) form a disordered region. Basic and acidic residues predominate over residues 10–24 (AREAPQQEDHSDSEA). The short motif at 52–80 (KSFKELGLIEQLCEACDSMGYKAPTAIQA) is the Q motif element. The region spanning 83-254 (IPLALQGRDL…RASLQNPLRV (172 aa)) is the Helicase ATP-binding domain. 96–103 (AETGSGKT) serves as a coordination point for ATP. The short motif at 202–205 (DEAD) is the DEAD box element. The Helicase C-terminal domain maps to 282-426 (YLVYLLNEFV…EYPAEKDEVM (145 aa)). The segment at 443 to 472 (MKNYDEKKGSRGKKFAKGKRSREDMDQEEG) is disordered. Basic residues predominate over residues 452 to 462 (SRGKKFAKGKR).

Belongs to the DEAD box helicase family. DDX47/RRP3 subfamily. Interacts with the SSU processome.

The protein resides in the nucleus. The enzyme catalyses ATP + H2O = ADP + phosphate + H(+). In terms of biological role, ATP-dependent rRNA helicase required for pre-ribosomal RNA processing. Involved in the maturation of the 35S-pre-rRNA and to its cleavage to mature 18S rRNA. The polypeptide is ATP-dependent rRNA helicase rrp3 (Aspergillus oryzae (strain ATCC 42149 / RIB 40) (Yellow koji mold)).